The primary structure comprises 363 residues: Mannose-1-phosphate guanyltransferase (363 aa).

Belongs to the transferase hexapeptide repeat family.

It localises to the cytoplasm. It carries out the reaction alpha-D-mannose 1-phosphate + GTP + H(+) = GDP-alpha-D-mannose + diphosphate. Its pathway is nucleotide-sugar biosynthesis; GDP-alpha-D-mannose biosynthesis; GDP-alpha-D-mannose from alpha-D-mannose 1-phosphate (GTP route): step 1/1. Involved in cell wall synthesis where it is required for glycosylation. Involved in cell cycle progression through cell-size checkpoint. Required for the correct assembly of the septum. This chain is Mannose-1-phosphate guanyltransferase (mpg1), found in Schizosaccharomyces pombe (strain 972 / ATCC 24843) (Fission yeast).